We begin with the raw amino-acid sequence, 631 residues long: Golgin subfamily A member 8R (631 aa).

Positions 1–72 are disordered; sequence MAEETQHNKL…REGPTSSATL (72 aa). Positions 38-50 are enriched in polar residues; sequence TNGSIPETATSGG. Coiled coils occupy residues 85–149, 209–247, and 303–419; these read VLDS…NTDL, ELEQSLQDQALLKAQLTQLKESFQQLQLERDECAEHIEG, and SEVE…LSLM. Disordered stretches follow at residues 422-451, 502-523, and 551-610; these read PGEGHGGEHLDSEGEEAPQPMPSVPEDPES, AKDAALGGGHHQAGAQGGDEGE, and NSAD…QEHP. A compositionally biased stretch (gly residues) spans 507-519; that stretch reads LGGGHHQAGAQGG. Residues 568 to 577 show a composition bias toward basic and acidic residues; it reads AADKHGDLRE.

This sequence belongs to the GOLGA8 family.

The protein is Golgin subfamily A member 8R of Homo sapiens (Human).